The sequence spans 548 residues: MESQRNLILIGLLFVSFLLWQQWESDKAPKPAPTTVAQTEHFVPEAGQTGDIPQVSEQANANTARKLITVSSDVLKLTLDTQGGDIVSADLLAHKLEEGKDQPFVLLTSQPEHLYVAQSGLVGRNGPDSQAQGRPTYEAAQTSYQLADGQDQVVVPMTWTDSKGVVFTKEFVLKRGDYAVGVDYKIDNKSAEPVQVQFYGQLKQTVTTPKDQQGHAMVASAYRGGAFSSEDTRYKKYTFDEMKDADLNKTTKGGWVAMLQHYFVSAWAPNADDTNSFYSRVIPGKDQAIIGYKAPLVDVAAGQQAEVTSKLWVGPKLQDQMAKVANHLDLTVDYGWLWFIAQPLHWLLTVFHGFVQNWGVAIIMLTLLVRGIMFPLTKAQYTSMAKMRMLQPKLAALRERFGDDRQKMSQGMMELYKKEKVNPLGGCLPILVQMPIFIALYWALMESVELRHAPFALWITDLSVKDPFFVLPILMGASMWYLQKMSPTTITDPMQQKVMQFMPIIFTFMFLWFPAGLTLYWLVSNVISITQQTIIYRQLEKKGLHTRS.

5 helical membrane passes run 6-26 (NLILIGLLFVSFLLWQQWESD), 357-377 (NWGVAIIMLTLLVRGIMFPLT), 424-444 (LGGCLPILVQMPIFIALYWAL), 455-475 (FALWITDLSVKDPFFVLPILM), and 503-523 (PIIFTFMFLWFPAGLTLYWLV).

The protein belongs to the OXA1/ALB3/YidC family. Type 1 subfamily. In terms of assembly, interacts with the Sec translocase complex via SecD. Specifically interacts with transmembrane segments of nascent integral membrane proteins during membrane integration.

Its subcellular location is the cell inner membrane. Functionally, required for the insertion and/or proper folding and/or complex formation of integral membrane proteins into the membrane. Involved in integration of membrane proteins that insert both dependently and independently of the Sec translocase complex, as well as at least some lipoproteins. Aids folding of multispanning membrane proteins. This is Membrane protein insertase YidC from Aeromonas hydrophila subsp. hydrophila (strain ATCC 7966 / DSM 30187 / BCRC 13018 / CCUG 14551 / JCM 1027 / KCTC 2358 / NCIMB 9240 / NCTC 8049).